Consider the following 196-residue polypeptide: Endoribonuclease YbeY (196 aa).

The Zn(2+) site is built by histidine 120, histidine 124, and histidine 130.

Belongs to the endoribonuclease YbeY family. Requires Zn(2+) as cofactor.

The protein resides in the cytoplasm. Its function is as follows. Single strand-specific metallo-endoribonuclease involved in late-stage 70S ribosome quality control and in maturation of the 3' terminus of the 16S rRNA. The polypeptide is Endoribonuclease YbeY (Corynebacterium diphtheriae (strain ATCC 700971 / NCTC 13129 / Biotype gravis)).